Here is a 449-residue protein sequence, read N- to C-terminus: UDP-N-acetylmuramate--L-alanine ligase (449 aa).

ATP is bound at residue Gly110–Thr116.

It belongs to the MurCDEF family.

The protein localises to the cytoplasm. The catalysed reaction is UDP-N-acetyl-alpha-D-muramate + L-alanine + ATP = UDP-N-acetyl-alpha-D-muramoyl-L-alanine + ADP + phosphate + H(+). It functions in the pathway cell wall biogenesis; peptidoglycan biosynthesis. In terms of biological role, cell wall formation. The chain is UDP-N-acetylmuramate--L-alanine ligase from Desulfitobacterium hafniense (strain Y51).